The following is a 150-amino-acid chain: Geranyl diphosphate phosphohydrolase (150 aa).

In terms of domain architecture, Nudix hydrolase spans 14–147 (SIKVAVVVCL…DNVVQDGFNP (134 aa)). Positions 48-69 (GHLEFGESFEECAARELKEETD) match the Nudix box motif. 2 residues coordinate Mg(2+): E63 and E67.

Belongs to the Nudix hydrolase family. Expressed in petals. Little or no expression in stamens, sepals or young leaves.

It is found in the cytoplasm. The enzyme catalyses (2E)-geranyl diphosphate + H2O = (2E)-geranyl phosphate + phosphate + H(+). Its function is as follows. Involved in a cytosolic pathway for the biosynthesis of free monoterpene alcohols that contribute to fragrance. Lacks terpene synthase activity, but has a diphosphohydrolase activity with geranyl diphosphate and farnesyl diphosphate as substrates. No activity with 8-oxo-dGTP and dGTP and unable to dephosphorylate geranyl phosphate to geraniol. In Rosa hybrid cultivar, this protein is Geranyl diphosphate phosphohydrolase.